Reading from the N-terminus, the 533-residue chain is Probable nucleolar protein 5-2 (533 aa).

In terms of domain architecture, Nop spans 281–399 (IAPNLTALVG…LEARLRNLEG (119 aa)). Disordered regions lie at residues 401-433 (DLGR…ITPA) and 445-533 (GETS…KSKD). Residues 413–424 (PKIEVYNKDKKM) are compositionally biased toward basic and acidic residues. Basic residues predominate over residues 521–533 (KKDKKEKKKKSKD).

It belongs to the NOP5/NOP56 family.

Its subcellular location is the nucleus. It localises to the nucleolus. Functionally, required for 60S ribosomal subunit biogenesis. The protein is Probable nucleolar protein 5-2 (NOP5-2) of Arabidopsis thaliana (Mouse-ear cress).